Consider the following 179-residue polypeptide: Shikimate kinase (179 aa).

ATP is bound at residue 15 to 20 (GAGKTS). A Mg(2+)-binding site is contributed by T19. Substrate-binding residues include D37, R61, and G83. R122 is a binding site for ATP. R142 contacts substrate.

This sequence belongs to the shikimate kinase family. In terms of assembly, monomer. It depends on Mg(2+) as a cofactor.

It is found in the cytoplasm. It carries out the reaction shikimate + ATP = 3-phosphoshikimate + ADP + H(+). It functions in the pathway metabolic intermediate biosynthesis; chorismate biosynthesis; chorismate from D-erythrose 4-phosphate and phosphoenolpyruvate: step 5/7. In terms of biological role, catalyzes the specific phosphorylation of the 3-hydroxyl group of shikimic acid using ATP as a cosubstrate. The sequence is that of Shikimate kinase from Coxiella burnetii (strain Dugway 5J108-111).